Consider the following 336-residue polypeptide: GTP 3',8-cyclase (336 aa).

The 222-residue stretch at 17 to 238 folds into the Radical SAM core domain; sequence GFSRRFHYLR…WTQQNRNLTD (222 aa). Arg-26 contributes to the GTP binding site. Positions 33 and 37 each coordinate [4Fe-4S] cluster. Residue Tyr-39 coordinates S-adenosyl-L-methionine. Cys-40 is a [4Fe-4S] cluster binding site. Residue Arg-75 coordinates GTP. Gly-79 contacts S-adenosyl-L-methionine. Thr-106 is a GTP binding site. Ser-130 contributes to the S-adenosyl-L-methionine binding site. Position 167 (Lys-167) interacts with GTP. Met-201 provides a ligand contact to S-adenosyl-L-methionine. [4Fe-4S] cluster is bound by residues Cys-264 and Cys-267. Residue 269–271 coordinates GTP; sequence RLR. A [4Fe-4S] cluster-binding site is contributed by Cys-281.

This sequence belongs to the radical SAM superfamily. MoaA family. As to quaternary structure, monomer and homodimer. [4Fe-4S] cluster serves as cofactor.

The catalysed reaction is GTP + AH2 + S-adenosyl-L-methionine = (8S)-3',8-cyclo-7,8-dihydroguanosine 5'-triphosphate + 5'-deoxyadenosine + L-methionine + A + H(+). The protein operates within cofactor biosynthesis; molybdopterin biosynthesis. Functionally, catalyzes the cyclization of GTP to (8S)-3',8-cyclo-7,8-dihydroguanosine 5'-triphosphate. The sequence is that of GTP 3',8-cyclase from Tolumonas auensis (strain DSM 9187 / NBRC 110442 / TA 4).